The sequence spans 270 residues: Beta carbonic anhydrase 1 (270 aa).

Residues Cys-39, Asp-41, His-105, and Cys-108 each contribute to the Zn(2+) site.

The protein belongs to the beta-class carbonic anhydrase family. It depends on Zn(2+) as a cofactor.

It carries out the reaction hydrogencarbonate + H(+) = CO2 + H2O. Reversible hydration of carbon dioxide. The polypeptide is Beta carbonic anhydrase 1 (Caenorhabditis briggsae).